Reading from the N-terminus, the 347-residue chain is N-acetyl-gamma-glutamyl-phosphate reductase (347 aa).

Cysteine 152 is a catalytic residue.

This sequence belongs to the NAGSA dehydrogenase family. Type 1 subfamily.

The protein localises to the cytoplasm. The catalysed reaction is N-acetyl-L-glutamate 5-semialdehyde + phosphate + NADP(+) = N-acetyl-L-glutamyl 5-phosphate + NADPH + H(+). It functions in the pathway amino-acid biosynthesis; L-arginine biosynthesis; N(2)-acetyl-L-ornithine from L-glutamate: step 3/4. In terms of biological role, catalyzes the NADPH-dependent reduction of N-acetyl-5-glutamyl phosphate to yield N-acetyl-L-glutamate 5-semialdehyde. The chain is N-acetyl-gamma-glutamyl-phosphate reductase from Neisseria gonorrhoeae (strain NCCP11945).